We begin with the raw amino-acid sequence, 121 residues long: Large ribosomal subunit protein bL20c (121 aa).

This sequence belongs to the bacterial ribosomal protein bL20 family.

It is found in the plastid. It localises to the chloroplast. Its function is as follows. Binds directly to 23S ribosomal RNA and is necessary for the in vitro assembly process of the 50S ribosomal subunit. It is not involved in the protein synthesizing functions of that subunit. The protein is Large ribosomal subunit protein bL20c of Lotus japonicus (Lotus corniculatus var. japonicus).